The primary structure comprises 150 residues: 3-hydroxyacyl-[acyl-carrier-protein] dehydratase FabZ (150 aa).

H51 is an active-site residue.

It belongs to the thioester dehydratase family. FabZ subfamily.

It is found in the cytoplasm. The enzyme catalyses a (3R)-hydroxyacyl-[ACP] = a (2E)-enoyl-[ACP] + H2O. In terms of biological role, involved in unsaturated fatty acids biosynthesis. Catalyzes the dehydration of short chain beta-hydroxyacyl-ACPs and long chain saturated and unsaturated beta-hydroxyacyl-ACPs. In Legionella pneumophila (strain Paris), this protein is 3-hydroxyacyl-[acyl-carrier-protein] dehydratase FabZ.